A 553-amino-acid polypeptide reads, in one-letter code: Dihydrolipoyllysine-residue acetyltransferase component of pyruvate dehydrogenase complex (553 aa).

In terms of domain architecture, Lipoyl-binding 1 spans 2 to 77 (AFSVQMPALG…EVGGELAVIG (76 aa)). The residue at position 43 (K43) is an N6-lipoyllysine. Residues 81 to 125 (DAGEAAAPAPEKVPAAQPESKPAPEPPPVQPTSGAPAGGDAKPVL) form a disordered region. The span at 84 to 100 (EAAAPAPEKVPAAQPES) shows a compositional bias: low complexity. The span at 101 to 110 (KPAPEPPPVQ) shows a compositional bias: pro residues. The Lipoyl-binding 2 domain maps to 121 to 196 (AKPVLMPELG…PVGGELARIG (76 aa)). At K162 the chain carries N6-lipoyllysine. 2 disordered regions span residues 204-238 (APAPKPAPKPVPEPAPTPKAEPAPSPPAAQPAGAA) and 278-321 (AAAE…TQKA). Pro residues predominate over residues 206–232 (APKPAPKPVPEPAPTPKAEPAPSPPAA). In terms of domain architecture, Peripheral subunit-binding (PSBD) spans 243–280 (YVTPLVRKLASENNIDLAGVTGTGVGGRIRKQDVLAAA). Residues 288-300 (APAPAAQAAAAPA) show a composition bias toward low complexity. Active-site residues include H523 and D527.

It belongs to the 2-oxoacid dehydrogenase family. In terms of assembly, forms a 24-polypeptide structural core with octahedral symmetry. Part of the PDH complex, consisting of multiple copies of AceE (E1), DlaT (E2) and Lpd (E3). (R)-lipoate serves as cofactor.

The catalysed reaction is N(6)-[(R)-dihydrolipoyl]-L-lysyl-[protein] + acetyl-CoA = N(6)-[(R)-S(8)-acetyldihydrolipoyl]-L-lysyl-[protein] + CoA. Functionally, component of the pyruvate dehydrogenase (PDH) complex, that catalyzes the overall conversion of pyruvate to acetyl-CoA and CO(2). The protein is Dihydrolipoyllysine-residue acetyltransferase component of pyruvate dehydrogenase complex (dlaT) of Mycobacterium bovis (strain ATCC BAA-935 / AF2122/97).